Consider the following 297-residue polypeptide: Probable endonuclease 4 (297 aa).

Zn(2+) is bound by residues histidine 68, histidine 109, glutamate 144, aspartate 178, histidine 181, histidine 213, aspartate 226, histidine 228, and glutamate 258.

Belongs to the AP endonuclease 2 family. Zn(2+) is required as a cofactor.

The enzyme catalyses Endonucleolytic cleavage to 5'-phosphooligonucleotide end-products.. Functionally, endonuclease IV plays a role in DNA repair. It cleaves phosphodiester bonds at apurinic or apyrimidinic (AP) sites, generating a 3'-hydroxyl group and a 5'-terminal sugar phosphate. In Enterococcus faecalis (strain ATCC 700802 / V583), this protein is Probable endonuclease 4.